Here is a 356-residue protein sequence, read N- to C-terminus: Peptide methionine sulfoxide reductase MsrA/MsrB (356 aa).

Residues 46–199 (HEIYLAGGCF…PNGYCHIDLE (154 aa)) are peptide methionine sulfoxide reductase A. Residue Cys-54 is part of the active site. Residues 216 to 339 (DAELKAKLTP…NSAAVKFIPL (124 aa)) form the MsrB domain. The active-site Nucleophile is the Cys-328.

This sequence in the N-terminal section; belongs to the MsrA Met sulfoxide reductase family. In the C-terminal section; belongs to the MsrB Met sulfoxide reductase family.

It carries out the reaction L-methionyl-[protein] + [thioredoxin]-disulfide + H2O = L-methionyl-(S)-S-oxide-[protein] + [thioredoxin]-dithiol. The enzyme catalyses [thioredoxin]-disulfide + L-methionine + H2O = L-methionine (S)-S-oxide + [thioredoxin]-dithiol. It catalyses the reaction L-methionyl-[protein] + [thioredoxin]-disulfide + H2O = L-methionyl-(R)-S-oxide-[protein] + [thioredoxin]-dithiol. Its function is as follows. Has an important function as a repair enzyme for proteins that have been inactivated by oxidation. Catalyzes the reversible oxidation-reduction of methionine sulfoxide in proteins to methionine. This chain is Peptide methionine sulfoxide reductase MsrA/MsrB (msrAB), found in Aggregatibacter actinomycetemcomitans (Actinobacillus actinomycetemcomitans).